The following is a 165-amino-acid chain: ATP synthase subunit b (165 aa).

The helical transmembrane segment at 10 to 30 (LIFWMLLSFGIVFAVLAKYGF) threads the bilayer.

Belongs to the ATPase B chain family. F-type ATPases have 2 components, F(1) - the catalytic core - and F(0) - the membrane proton channel. F(1) has five subunits: alpha(3), beta(3), gamma(1), delta(1), epsilon(1). F(0) has three main subunits: a(1), b(2) and c(10-14). The alpha and beta chains form an alternating ring which encloses part of the gamma chain. F(1) is attached to F(0) by a central stalk formed by the gamma and epsilon chains, while a peripheral stalk is formed by the delta and b chains.

It localises to the cell inner membrane. In terms of biological role, f(1)F(0) ATP synthase produces ATP from ADP in the presence of a proton or sodium gradient. F-type ATPases consist of two structural domains, F(1) containing the extramembraneous catalytic core and F(0) containing the membrane proton channel, linked together by a central stalk and a peripheral stalk. During catalysis, ATP synthesis in the catalytic domain of F(1) is coupled via a rotary mechanism of the central stalk subunits to proton translocation. Component of the F(0) channel, it forms part of the peripheral stalk, linking F(1) to F(0). This is ATP synthase subunit b from Bacteroides fragilis (strain ATCC 25285 / DSM 2151 / CCUG 4856 / JCM 11019 / LMG 10263 / NCTC 9343 / Onslow / VPI 2553 / EN-2).